The sequence spans 411 residues: Peptide chain release factor subunit 1 (411 aa).

It belongs to the eukaryotic release factor 1 family. As to quaternary structure, heterodimer of two subunits, one of which binds GTP.

Its subcellular location is the cytoplasm. Its function is as follows. Directs the termination of nascent peptide synthesis (translation) in response to the termination codons UAA, UAG and UGA. The polypeptide is Peptide chain release factor subunit 1 (Methanosphaera stadtmanae (strain ATCC 43021 / DSM 3091 / JCM 11832 / MCB-3)).